A 676-amino-acid polypeptide reads, in one-letter code: Double-stranded RNA-specific editase Adar (676 aa).

The tract at residues M1–K51 is disordered. Positions M8–G31 are enriched in polar residues. A compositionally biased stretch (basic and acidic residues) spans R40–K51. 2 DRBM domains span residues Q61–Q127 and I197–N272. Positions S348–F672 constitute an A to I editase domain. H372 lines the Zn(2+) pocket. E374 serves as the catalytic Proton donor. Zn(2+) is bound by residues C430 and C493.

In terms of tissue distribution, expressed in embryonic nervous system; late stage 13 sees ventral nerve cord expression which spreads to brain by stage 16. Expression is maintained through to adulthood.

Its function is as follows. Has A-to-I RNA editing activity on extended dsRNA: edits RNA-binding protein Rnp4F. A-to-I editing of pre-mRNAs acts predominantly through nervous system targets to affect adult nervous system integrity, function and behavior. Essential for adaptation to environmental stresses, such as oxygen deprivation, and for the prevention of premature neuronal degeneration, through the editing of ion channels as targets. This Drosophila melanogaster (Fruit fly) protein is Double-stranded RNA-specific editase Adar.